The following is a 250-amino-acid chain: 3-deoxy-manno-octulosonate cytidylyltransferase (250 aa).

Belongs to the KdsB family.

The protein localises to the cytoplasm. It catalyses the reaction 3-deoxy-alpha-D-manno-oct-2-ulosonate + CTP = CMP-3-deoxy-beta-D-manno-octulosonate + diphosphate. It participates in nucleotide-sugar biosynthesis; CMP-3-deoxy-D-manno-octulosonate biosynthesis; CMP-3-deoxy-D-manno-octulosonate from 3-deoxy-D-manno-octulosonate and CTP: step 1/1. Its pathway is bacterial outer membrane biogenesis; lipopolysaccharide biosynthesis. Activates KDO (a required 8-carbon sugar) for incorporation into bacterial lipopolysaccharide in Gram-negative bacteria. The protein is 3-deoxy-manno-octulosonate cytidylyltransferase of Francisella tularensis subsp. holarctica (strain LVS).